The following is a 226-amino-acid chain: Holliday junction branch migration complex subunit RuvA (226 aa).

Residues 1–67 (MITSVYAKIE…AINKELYAFK (67 aa)) form a domain I region. The interval 68–145 (SLKEKEWFKA…YLKNQIVVSD (78 aa)) is domain II. Positions 146–167 (KVEPQIDDDEKIDDSKDLNDDE) are flexible linker. The interval 168–226 (LLSEIVIEAIDCLISLGYKQEQIKTALAEIDLKNESINDSADLVAVIIKQIGLRTSEVS) is domain III.

It belongs to the RuvA family. In terms of assembly, homotetramer. Forms an RuvA(8)-RuvB(12)-Holliday junction (HJ) complex. HJ DNA is sandwiched between 2 RuvA tetramers; dsDNA enters through RuvA and exits via RuvB. An RuvB hexamer assembles on each DNA strand where it exits the tetramer. Each RuvB hexamer is contacted by two RuvA subunits (via domain III) on 2 adjacent RuvB subunits; this complex drives branch migration. In the full resolvosome a probable DNA-RuvA(4)-RuvB(12)-RuvC(2) complex forms which resolves the HJ.

The protein resides in the cytoplasm. Functionally, the RuvA-RuvB-RuvC complex processes Holliday junction (HJ) DNA during genetic recombination and DNA repair, while the RuvA-RuvB complex plays an important role in the rescue of blocked DNA replication forks via replication fork reversal (RFR). RuvA specifically binds to HJ cruciform DNA, conferring on it an open structure. The RuvB hexamer acts as an ATP-dependent pump, pulling dsDNA into and through the RuvAB complex. HJ branch migration allows RuvC to scan DNA until it finds its consensus sequence, where it cleaves and resolves the cruciform DNA. This is Holliday junction branch migration complex subunit RuvA from Mycoplasmoides gallisepticum (strain R(low / passage 15 / clone 2)) (Mycoplasma gallisepticum).